The following is a 246-amino-acid chain: 2-C-methyl-D-erythritol 4-phosphate cytidylyltransferase (246 aa).

It belongs to the IspD/TarI cytidylyltransferase family. IspD subfamily.

It catalyses the reaction 2-C-methyl-D-erythritol 4-phosphate + CTP + H(+) = 4-CDP-2-C-methyl-D-erythritol + diphosphate. The protein operates within isoprenoid biosynthesis; isopentenyl diphosphate biosynthesis via DXP pathway; isopentenyl diphosphate from 1-deoxy-D-xylulose 5-phosphate: step 2/6. Its function is as follows. Catalyzes the formation of 4-diphosphocytidyl-2-C-methyl-D-erythritol from CTP and 2-C-methyl-D-erythritol 4-phosphate (MEP). In Chlorobaculum tepidum (strain ATCC 49652 / DSM 12025 / NBRC 103806 / TLS) (Chlorobium tepidum), this protein is 2-C-methyl-D-erythritol 4-phosphate cytidylyltransferase.